Consider the following 672-residue polypeptide: Leucine-rich repeat receptor-like protein kinase PXC1 (672 aa).

The signal sequence occupies residues 1–21 (MAAKPLLLPLLLLLHLSITLA). Residues 22 to 269 (QNDTNALTLF…IHSHRGIKPG (248 aa)) lie on the Extracellular side of the membrane. N-linked (GlcNAc...) asparagine glycosylation is found at N23, N44, and N101. One copy of the LRR 1 repeat lies at 87–110 (LDQLRLLDLHDNRLNGTVSPLTNC). Residue K111 forms a Glycyl lysine isopeptide (Lys-Gly) (interchain with G-Cter in ubiquitin) linkage. LRR repeat units lie at residues 112–134 (NLRL…ISFL), 135–158 (KRMI…ILGF), 160–181 (RVLT…FSQM), and 182–205 (KSLL…VVKK). N188 and N197 each carry an N-linked (GlcNAc...) asparagine glycan. The segment covering 233-249 (ESSNTDQIVPSNPTSIP) has biased composition (polar residues). The disordered stretch occupies residues 233 to 254 (ESSNTDQIVPSNPTSIPHSPVS). A helical membrane pass occupies residues 270 to 290 (IIAAVIGGCVAVIVLVSFGFA). The Cytoplasmic portion of the chain corresponds to 291 to 672 (FCCGRLDRNG…MSPSLATTDG (382 aa)). The segment at 300–333 (GERSKSGSVETGFVGGGEGKRRSSYGEGGESDAT) is disordered. The Protein kinase domain maps to 357 to 645 (KASAEMLGKG…AEVVKMVEEI (289 aa)). ATP is bound by residues 363 to 371 (LGKGSLGTV) and K386. Residues 650-672 (SPVGEDFDESRNSMSPSLATTDG) form a disordered region. Residues 661-672 (NSMSPSLATTDG) show a composition bias toward polar residues.

Belongs to the protein kinase superfamily. Ser/Thr protein kinase family. As to expression, expressed in the vascular strands of cotyledons, the shoot apex, hypocotyls, roots, leaves, stems and flowers.

The protein resides in the cell membrane. Functionally, leucine-rich repeat receptor-like protein kinase involved in secondary cell wall formation in xylem fibers. May play a role in a regulatory network which also incorporates the TDR/PXY signaling pathway and regulates the maturation of interfascicular fiber cells. May promote the initiation of secondary cell wall deposition during the procedure of cell expansion. This Arabidopsis thaliana (Mouse-ear cress) protein is Leucine-rich repeat receptor-like protein kinase PXC1.